The primary structure comprises 101 residues: ATP synthase subunit f, mitochondrial (101 aa).

The N-terminal 6 residues, 1–6 (MIFKRA), are a transit peptide targeting the mitochondrion.

It belongs to the ATPase F chain family. In terms of assembly, F-type ATPases have 2 components, CF(1) - the catalytic core - and CF(0) - the membrane proton channel. In yeast, the dimeric form of ATP synthase consists of 17 polypeptides: alpha, beta, gamma, delta, epsilon, 4 (B), 5 (OSCP), 6 (A), 8, 9 (C), d, E (Tim11), f, g, h, i/j and k.

The protein resides in the mitochondrion. The protein localises to the mitochondrion inner membrane. Its function is as follows. Mitochondrial membrane ATP synthase (F(1)F(0) ATP synthase or Complex V) produces ATP from ADP in the presence of a proton gradient across the membrane which is generated by electron transport complexes of the respiratory chain. F-type ATPases consist of two structural domains, F(1) - containing the extramembraneous catalytic core and F(0) - containing the membrane proton channel, linked together by a central stalk and a peripheral stalk. During catalysis, ATP synthesis in the catalytic domain of F(1) is coupled via a rotary mechanism of the central stalk subunits to proton translocation. Part of the complex F(0) domain. Minor subunit located with subunit a in the membrane. In Saccharomyces cerevisiae (strain ATCC 204508 / S288c) (Baker's yeast), this protein is ATP synthase subunit f, mitochondrial (ATP17).